The chain runs to 384 residues: Carbamoyl phosphate synthase small chain (384 aa).

The CPSase stretch occupies residues 1–195; it reads MLPVLPPALL…LGRGHGTLAD (195 aa). L-glutamine is bound by residues S50, G247, and G249. In terms of domain architecture, Glutamine amidotransferase type-1 spans 199–384; that stretch reads HVVAYDFGVK…RFVALMQERA (186 aa). C275 functions as the Nucleophile in the catalytic mechanism. L-glutamine contacts are provided by L276, Q279, N317, G319, and F320. Residues H359 and E361 contribute to the active site.

It belongs to the CarA family. Composed of two chains; the small (or glutamine) chain promotes the hydrolysis of glutamine to ammonia, which is used by the large (or ammonia) chain to synthesize carbamoyl phosphate. Tetramer of heterodimers (alpha,beta)4.

The catalysed reaction is hydrogencarbonate + L-glutamine + 2 ATP + H2O = carbamoyl phosphate + L-glutamate + 2 ADP + phosphate + 2 H(+). It carries out the reaction L-glutamine + H2O = L-glutamate + NH4(+). Its pathway is amino-acid biosynthesis; L-arginine biosynthesis; carbamoyl phosphate from bicarbonate: step 1/1. The protein operates within pyrimidine metabolism; UMP biosynthesis via de novo pathway; (S)-dihydroorotate from bicarbonate: step 1/3. Its function is as follows. Small subunit of the glutamine-dependent carbamoyl phosphate synthetase (CPSase). CPSase catalyzes the formation of carbamoyl phosphate from the ammonia moiety of glutamine, carbonate, and phosphate donated by ATP, constituting the first step of 2 biosynthetic pathways, one leading to arginine and/or urea and the other to pyrimidine nucleotides. The small subunit (glutamine amidotransferase) binds and cleaves glutamine to supply the large subunit with the substrate ammonia. The chain is Carbamoyl phosphate synthase small chain from Rubrivivax gelatinosus (strain NBRC 100245 / IL144).